The following is a 304-amino-acid chain: Dihydroorotate dehydrogenase B (NAD(+)), catalytic subunit (304 aa).

Residues serine 21 and 45–46 contribute to the FMN site; that span reads KA. Substrate is bound by residues lysine 45 and 69-73; that span reads NAIGL. Positions 99 and 127 each coordinate FMN. Position 127 (asparagine 127) interacts with substrate. The Nucleophile role is filled by cysteine 130. FMN-binding residues include lysine 165 and isoleucine 191. Residue 192–193 participates in substrate binding; that stretch reads NT. Residues glycine 217, 243 to 244, and 265 to 266 contribute to the FMN site; these read GG and GT.

The protein belongs to the dihydroorotate dehydrogenase family. Type 1 subfamily. Heterotetramer of 2 PyrK and 2 PyrD type B subunits. FMN serves as cofactor.

Its subcellular location is the cytoplasm. The enzyme catalyses (S)-dihydroorotate + NAD(+) = orotate + NADH + H(+). It functions in the pathway pyrimidine metabolism; UMP biosynthesis via de novo pathway; orotate from (S)-dihydroorotate (NAD(+) route): step 1/1. Functionally, catalyzes the conversion of dihydroorotate to orotate with NAD(+) as electron acceptor. The polypeptide is Dihydroorotate dehydrogenase B (NAD(+)), catalytic subunit (pyrD) (Listeria monocytogenes serotype 4a (strain HCC23)).